The chain runs to 115 residues: Large ribosomal subunit protein bL19 (115 aa).

The protein belongs to the bacterial ribosomal protein bL19 family.

This protein is located at the 30S-50S ribosomal subunit interface and may play a role in the structure and function of the aminoacyl-tRNA binding site. This chain is Large ribosomal subunit protein bL19, found in Streptococcus thermophilus (strain CNRZ 1066).